The sequence spans 229 residues: 3-dehydroquinate dehydratase (229 aa).

Residues 29–31 (ELR) and arginine 56 each bind 3-dehydroquinate. Residue histidine 120 is the Proton donor/acceptor of the active site. Lysine 146 serves as the catalytic Schiff-base intermediate with substrate. 3 residues coordinate 3-dehydroquinate: arginine 187, threonine 208, and glutamine 212.

It belongs to the type-I 3-dehydroquinase family. As to quaternary structure, homodimer.

The catalysed reaction is 3-dehydroquinate = 3-dehydroshikimate + H2O. It functions in the pathway metabolic intermediate biosynthesis; chorismate biosynthesis; chorismate from D-erythrose 4-phosphate and phosphoenolpyruvate: step 3/7. Involved in the third step of the chorismate pathway, which leads to the biosynthesis of aromatic amino acids. Catalyzes the cis-dehydration of 3-dehydroquinate (DHQ) and introduces the first double bond of the aromatic ring to yield 3-dehydroshikimate. The protein is 3-dehydroquinate dehydratase of Haloarcula marismortui (strain ATCC 43049 / DSM 3752 / JCM 8966 / VKM B-1809) (Halobacterium marismortui).